The following is a 189-amino-acid chain: Dual-action ribosomal maturation protein DarP (189 aa).

Positions 1-22 (MWKNGAMRGCNKETGEFLGPSR) are disordered.

This sequence belongs to the DarP family.

It localises to the cytoplasm. Member of a network of 50S ribosomal subunit biogenesis factors which assembles along the 30S-50S interface, preventing incorrect 23S rRNA structures from forming. Promotes peptidyl transferase center (PTC) maturation. The polypeptide is Dual-action ribosomal maturation protein DarP (Xylella fastidiosa (strain Temecula1 / ATCC 700964)).